Reading from the N-terminus, the 427-residue chain is Serine/threonine-protein kinase AFC2 (427 aa).

Residues 98–423 enclose the Protein kinase domain; it reads YKIYSKMGEG…AREALRHPFF (326 aa). ATP is bound by residues 104–112 and lysine 127; that span reads MGEGTFGQV. Aspartate 223 acts as the Proton acceptor in catalysis.

The protein belongs to the protein kinase superfamily. CMGC Ser/Thr protein kinase family. Lammer subfamily.

The catalysed reaction is L-seryl-[protein] + ATP = O-phospho-L-seryl-[protein] + ADP + H(+). It catalyses the reaction L-threonyl-[protein] + ATP = O-phospho-L-threonyl-[protein] + ADP + H(+). The enzyme catalyses L-tyrosyl-[protein] + ATP = O-phospho-L-tyrosyl-[protein] + ADP + H(+). The protein is Serine/threonine-protein kinase AFC2 (AFC2) of Arabidopsis thaliana (Mouse-ear cress).